The following is a 420-amino-acid chain: UDP-glucuronic acid decarboxylase 1 (420 aa).

The residue at position 1 (methionine 1) is an N-acetylmethionine. Over 1–19 (MVSKGLLRLVSSVNRRKMK) the chain is Cytoplasmic. Residues 20–40 (LLLGIALFAYAASVWGNFVNM) traverse the membrane as a helical; Signal-anchor for type II membrane protein segment. Over 41–420 (RSIQENGELK…RVKKGRTRHS (380 aa)) the chain is Lumenal. Threonine 94 bears the Phosphothreonine mark. The NAD(+) site is built by glycine 98, phenylalanine 99, valine 100, aspartate 119, asparagine 120, phenylalanine 122, threonine 123, glycine 124, aspartate 144, and valine 145. Leucine 149 and tyrosine 150 together coordinate UDP-alpha-D-glucuronate. NAD(+) contacts are provided by leucine 159 and serine 161. Lysine 177 provides a ligand contact to UDP-alpha-D-glucuronate. Position 178 (threonine 178) interacts with NAD(+). UDP-alpha-D-glucuronate contacts are provided by asparagine 185, glycine 188, lysine 191, and arginine 192. Residues alanine 200, tyrosine 231, and lysine 235 each coordinate NAD(+). Tyrosine 231 (proton acceptor) is an active-site residue. UDP-alpha-D-glucuronate is bound by residues tyrosine 245, glutamine 248, and glutamate 249. Residues threonine 261, histidine 267, and arginine 272 each coordinate NAD(+). The N-linked (GlcNAc...) asparagine glycan is linked to asparagine 316.

Belongs to the NAD(P)-dependent epimerase/dehydratase family. UDP-glucuronic acid decarboxylase subfamily. Homodimer and homotetramer. Interacts with AKT1. Requires NAD(+) as cofactor. As to expression, ubiquitous. Detected in heart, brain, spleen, lung, testis, liver, skeletal muscle and kidney.

The protein resides in the golgi apparatus. It localises to the golgi stack membrane. The catalysed reaction is UDP-alpha-D-glucuronate + H(+) = UDP-alpha-D-xylose + CO2. Its pathway is nucleotide-sugar biosynthesis; UDP-alpha-D-xylose biosynthesis; UDP-alpha-D-xylose from UDP-alpha-D-glucuronate: step 1/1. Functionally, catalyzes the NAD-dependent decarboxylation of UDP-glucuronic acid to UDP-xylose. Necessary for the biosynthesis of the core tetrasaccharide in glycosaminoglycan biosynthesis. The sequence is that of UDP-glucuronic acid decarboxylase 1 from Rattus norvegicus (Rat).